Here is a 510-residue protein sequence, read N- to C-terminus: ATP synthase subunit alpha (510 aa).

ATP is bound at residue 170–177; the sequence is GDRQTGKT.

It belongs to the ATPase alpha/beta chains family. F-type ATPases have 2 components, CF(1) - the catalytic core - and CF(0) - the membrane proton channel. CF(1) has five subunits: alpha(3), beta(3), gamma(1), delta(1), epsilon(1). CF(0) has three main subunits: a(1), b(2) and c(9-12). The alpha and beta chains form an alternating ring which encloses part of the gamma chain. CF(1) is attached to CF(0) by a central stalk formed by the gamma and epsilon chains, while a peripheral stalk is formed by the delta and b chains.

It is found in the cell inner membrane. The catalysed reaction is ATP + H2O + 4 H(+)(in) = ADP + phosphate + 5 H(+)(out). Its function is as follows. Produces ATP from ADP in the presence of a proton gradient across the membrane. The alpha chain is a regulatory subunit. In Maricaulis maris (strain MCS10) (Caulobacter maris), this protein is ATP synthase subunit alpha.